A 1171-amino-acid chain; its full sequence is ATP-dependent helicase/deoxyribonuclease subunit B (1171 aa).

The region spanning 1–287 (MSLRFVIGRA…IPLMEQPRFH (287 aa)) is the UvrD-like helicase ATP-binding domain. 8-15 (GRAGSGKS) contributes to the ATP binding site. Residues 281–587 (MEQPRFHSPA…QFANIPPSLD (307 aa)) form the UvrD-like helicase C-terminal domain. The [4Fe-4S] cluster site is built by Cys-805, Cys-1129, Cys-1132, and Cys-1138.

This sequence belongs to the helicase family. AddB/RexB type 1 subfamily. In terms of assembly, heterodimer of AddA and AddB. It depends on Mg(2+) as a cofactor. [4Fe-4S] cluster is required as a cofactor.

In terms of biological role, the heterodimer acts as both an ATP-dependent DNA helicase and an ATP-dependent, dual-direction single-stranded exonuclease. Recognizes the chi site generating a DNA molecule suitable for the initiation of homologous recombination. The AddB subunit has 5' -&gt; 3' nuclease activity but not helicase activity. The polypeptide is ATP-dependent helicase/deoxyribonuclease subunit B (Bacillus cereus (strain G9842)).